A 315-amino-acid polypeptide reads, in one-letter code: Ribosomal RNA large subunit methyltransferase F (315 aa).

The protein belongs to the methyltransferase superfamily. METTL16/RlmF family.

The protein localises to the cytoplasm. It catalyses the reaction adenosine(1618) in 23S rRNA + S-adenosyl-L-methionine = N(6)-methyladenosine(1618) in 23S rRNA + S-adenosyl-L-homocysteine + H(+). Its function is as follows. Specifically methylates the adenine in position 1618 of 23S rRNA. This chain is Ribosomal RNA large subunit methyltransferase F, found in Aeromonas salmonicida (strain A449).